Here is a 235-residue protein sequence, read N- to C-terminus: Large ribosomal subunit protein uL1 (235 aa).

The protein belongs to the universal ribosomal protein uL1 family. Part of the 50S ribosomal subunit.

Its function is as follows. Binds directly to 23S rRNA. The L1 stalk is quite mobile in the ribosome, and is involved in E site tRNA release. Protein L1 is also a translational repressor protein, it controls the translation of the L11 operon by binding to its mRNA. The chain is Large ribosomal subunit protein uL1 from Rhodospirillum centenum (strain ATCC 51521 / SW).